A 265-amino-acid chain; its full sequence is Thiazole synthase (265 aa).

Lys-107 (schiff-base intermediate with DXP) is an active-site residue. Residues Gly-168, 194-195, and 216-217 contribute to the 1-deoxy-D-xylulose 5-phosphate site; these read AG and NT.

Belongs to the ThiG family. In terms of assembly, homotetramer. Forms heterodimers with either ThiH or ThiS.

It is found in the cytoplasm. It catalyses the reaction [ThiS sulfur-carrier protein]-C-terminal-Gly-aminoethanethioate + 2-iminoacetate + 1-deoxy-D-xylulose 5-phosphate = [ThiS sulfur-carrier protein]-C-terminal Gly-Gly + 2-[(2R,5Z)-2-carboxy-4-methylthiazol-5(2H)-ylidene]ethyl phosphate + 2 H2O + H(+). The protein operates within cofactor biosynthesis; thiamine diphosphate biosynthesis. Functionally, catalyzes the rearrangement of 1-deoxy-D-xylulose 5-phosphate (DXP) to produce the thiazole phosphate moiety of thiamine. Sulfur is provided by the thiocarboxylate moiety of the carrier protein ThiS. In vitro, sulfur can be provided by H(2)S. This chain is Thiazole synthase, found in Pseudomonas paraeruginosa (strain DSM 24068 / PA7) (Pseudomonas aeruginosa (strain PA7)).